Consider the following 97-residue polypeptide: Small ribosomal subunit protein bS20 (97 aa).

The protein belongs to the bacterial ribosomal protein bS20 family.

In terms of biological role, binds directly to 16S ribosomal RNA. This is Small ribosomal subunit protein bS20 from Prochlorococcus marinus (strain MIT 9515).